The following is a 340-amino-acid chain: Dihydroorotate dehydrogenase (quinone) (340 aa).

FMN contacts are provided by residues 61-65 and Thr-85; that span reads AGLDK. Residue Lys-65 coordinates substrate. 110–114 contributes to the substrate binding site; it reads NRMGF. The FMN site is built by Asn-138 and Asn-171. Position 171 (Asn-171) interacts with substrate. The active-site Nucleophile is the Ser-174. Residue Asn-176 participates in substrate binding. FMN-binding residues include Lys-216 and Thr-244. 245 to 246 contacts substrate; sequence NT. FMN-binding positions include Gly-267, Gly-296, and 317–318; that span reads YS.

This sequence belongs to the dihydroorotate dehydrogenase family. Type 2 subfamily. As to quaternary structure, monomer. The cofactor is FMN.

Its subcellular location is the cell membrane. The enzyme catalyses (S)-dihydroorotate + a quinone = orotate + a quinol. The protein operates within pyrimidine metabolism; UMP biosynthesis via de novo pathway; orotate from (S)-dihydroorotate (quinone route): step 1/1. In terms of biological role, catalyzes the conversion of dihydroorotate to orotate with quinone as electron acceptor. The polypeptide is Dihydroorotate dehydrogenase (quinone) (Pseudomonas putida (strain ATCC 47054 / DSM 6125 / CFBP 8728 / NCIMB 11950 / KT2440)).